Consider the following 117-residue polypeptide: MPRVKRGVQARARHKKILKQAKGYYGARSRVYRVAFQAVTKAGQYAYRDRRTKKRQFRQLWIARINAASRQNGLSYSRFINGLKKASIEIDRKILADIAVFDKAAFSVLVEKAKAAL.

Belongs to the bacterial ribosomal protein bL20 family.

Its function is as follows. Binds directly to 23S ribosomal RNA and is necessary for the in vitro assembly process of the 50S ribosomal subunit. It is not involved in the protein synthesizing functions of that subunit. This chain is Large ribosomal subunit protein bL20, found in Vibrio metschnikovii.